A 61-amino-acid polypeptide reads, in one-letter code: Small ribosomal subunit protein uS14 (61 aa).

Residues Cys-24, Cys-27, Cys-40, and Cys-43 each coordinate Zn(2+).

The protein belongs to the universal ribosomal protein uS14 family. Zinc-binding uS14 subfamily. As to quaternary structure, part of the 30S ribosomal subunit. Contacts proteins S3 and S10. The cofactor is Zn(2+).

In terms of biological role, binds 16S rRNA, required for the assembly of 30S particles and may also be responsible for determining the conformation of the 16S rRNA at the A site. This is Small ribosomal subunit protein uS14 from Aliarcobacter butzleri (strain RM4018) (Arcobacter butzleri).